A 1029-amino-acid polypeptide reads, in one-letter code: Beta-galactosidase (1029 aa).

Positions 108 and 207 each coordinate substrate. A Na(+)-binding site is contributed by Asp207. Residues Glu422, His424, and Glu467 each contribute to the Mg(2+) site. Substrate is bound by residues Glu467 and 543–546 (EYAH). Glu467 functions as the Proton donor in the catalytic mechanism. Glu543 (nucleophile) is an active-site residue. Asn603 provides a ligand contact to Mg(2+). Positions 607 and 610 each coordinate Na(+). 2 residues coordinate substrate: Asn610 and Trp1005.

This sequence belongs to the glycosyl hydrolase 2 family. In terms of assembly, homotetramer. Requires Mg(2+) as cofactor. Na(+) serves as cofactor.

The catalysed reaction is Hydrolysis of terminal non-reducing beta-D-galactose residues in beta-D-galactosides.. In Escherichia coli, this protein is Beta-galactosidase.